A 370-amino-acid chain; its full sequence is Prolactin-releasing peptide receptor (370 aa).

Residues 1–62 are Extracellular-facing; that stretch reads MASLPTQGPA…LQLVHQLKGL (62 aa). N27 and N36 each carry an N-linked (GlcNAc...) asparagine glycan. Residues 63–83 traverse the membrane as a helical segment; that stretch reads IVLLYSIVVVVGLVGNCLLVL. Residues 84–101 lie on the Cytoplasmic side of the membrane; the sequence is VIARVRRLHNVTNFLIGN. Residues 102–122 form a helical membrane-spanning segment; it reads LALSDVLMCTACVPLTLAYAF. At 123 to 126 the chain is on the extracellular side; it reads EPRG. A helical membrane pass occupies residues 127–147; it reads WVFGGGLCHLVFFLQPVTVYV. C134 and C211 are oxidised to a cystine. Residues 148-175 are Cytoplasmic-facing; the sequence is SVFTLTTIAVDRYVVLVHPLRRRISLRF. Residues 176-196 form a helical membrane-spanning segment; sequence SAYAVLAIWALSAVLALPAAL. Topologically, residues 197–225 are extracellular; sequence HTYHVELKPHRVRLCEEFWGSQERQRQLY. The helical transmembrane segment at 226 to 246 threads the bilayer; the sequence is AWGLLLVTYLLPLLVILLSYV. At 247 to 276 the chain is on the cytoplasmic side; it reads RVSVNLRNRVVPGCVTQSQADWDRARRRRT. Residues 277-297 traverse the membrane as a helical segment; the sequence is FCLLVVVVVVFAVCWLPLHVF. Residues 298-317 are Extracellular-facing; it reads NLLRDLDPHAIDPYAFGLVQ. A helical transmembrane segment spans residues 318 to 338; it reads LLCHWLAMSSACYNPFIYAWL. Topologically, residues 339–369 are cytoplasmic; sequence HDSFREELRKLLLAWPRKIAPHGQSMTVSVV. Residues 365–370 are required for interaction with GRIP1, GRIP2 and PICK1; sequence TVSVVI.

The protein belongs to the G-protein coupled receptor 1 family. In terms of assembly, interacts through its C-terminal region with the PDZ domain-containing proteins GRIP1, GRIP2 and PICK1. Interacts with PDZ domains 4 and 5 of GRIP1 and with the PDZ domain of PICK1.

It is found in the cell membrane. Receptor for prolactin-releasing peptide (PrRP). Implicated in lactation, regulation of food intake and pain-signal processing. The polypeptide is Prolactin-releasing peptide receptor (PRLHR) (Bos taurus (Bovine)).